A 232-amino-acid polypeptide reads, in one-letter code: MSKLTKKQKLAFSKIEPGKAYTISEASALVKEITTTNFDASVDIDVRLGVDPRKANQMVRGVVTLPHGTGKQIRVLALCSPDKEAEAKEAGADYVGLDEYIEKIKAGWTDIDVIITMPAIMGKIGALGRVLGPRGLMPNPKSGTVTNDVGAAVKEVKAGKIDFKVDKTGIVHTSIGKVSFSADQIRDNAREFINTIIKLKPTTAKGTYIKSIYLSSTMSFGIKVDPKTVDEN.

This sequence belongs to the universal ribosomal protein uL1 family. As to quaternary structure, part of the 50S ribosomal subunit.

Its function is as follows. Binds directly to 23S rRNA. The L1 stalk is quite mobile in the ribosome, and is involved in E site tRNA release. Functionally, protein L1 is also a translational repressor protein, it controls the translation of the L11 operon by binding to its mRNA. The chain is Large ribosomal subunit protein uL1 from Porphyromonas gingivalis (strain ATCC 33277 / DSM 20709 / CIP 103683 / JCM 12257 / NCTC 11834 / 2561).